Consider the following 420-residue polypeptide: Melatonin receptor type 1C (420 aa).

Over 1 to 34 (MMEVNSTCLDCRTPGTIRTEQDAQDSASQGLTSA) the chain is Extracellular. An N-linked (GlcNAc...) asparagine glycan is attached at Asn5. A helical membrane pass occupies residues 35-55 (LAVVLIFTIVVDVLGNILVIL). Residues 56–73 (SVLRNKKLQNAGNLFVVS) are Cytoplasmic-facing. The helical transmembrane segment at 74–94 (LSIADLVVAVYPYPVILIAIF) threads the bilayer. Residues 95–106 (QNGWTLGNIHCQ) lie on the Extracellular side of the membrane. Residues Cys105 and Cys182 are joined by a disulfide bond. A helical membrane pass occupies residues 107 to 127 (ISGFLMGLSVIGSVFNITAIA). The Cytoplasmic segment spans residues 128–152 (INRYCYICHSLRYDKLYNQRSTWCY). A helical membrane pass occupies residues 153 to 173 (LGLTWILTIIAIVPNFFVGSL). Residues 174–192 (QYDPRIFSCTFAQTVSSSY) are Extracellular-facing. Residues 193-213 (TITVVVVHFIVPLSVVTFCYL) form a helical membrane-spanning segment. The Cytoplasmic portion of the chain corresponds to 214 to 245 (RIWVLVIQVKHRVRQDFKQKLTQTDLRNFLTM). Residues 246-266 (FVVFVLFAVCWAPLNFIGLAV) traverse the membrane as a helical segment. Topologically, residues 267 to 279 (AINPFHVAPKIPE) are extracellular. Residues 280–303 (WLFVLSYFMAYFNSCLNAVIYGVL) form a helical membrane-spanning segment. Residues 304-420 (NQNFRKEYKR…ELCKDGISQR (117 aa)) lie on the Cytoplasmic side of the membrane.

This sequence belongs to the G-protein coupled receptor 1 family. In terms of tissue distribution, moderately expressed in dermal melanophores.

It is found in the cell membrane. Its function is as follows. High affinity receptor for melatonin. Likely to mediate the potent effects of melatonin on pigment aggregation in melanophores. The activity of this receptor is mediated by pertussis toxin sensitive G proteins that inhibit adenylate cyclase activity. The chain is Melatonin receptor type 1C (mtnr1c) from Xenopus laevis (African clawed frog).